Consider the following 174-residue polypeptide: Protein-lysine myristoyltransferase HlyC (174 aa).

Residues histidine 23 and aspartate 92 contribute to the active site. Position 151 (histidine 151) interacts with heme.

It belongs to the RTX toxin acyltransferase family. As to quaternary structure, monomer. Post-translationally, proteolytically cleaved by the protease systems ClpAP, ClpXP and FtsH, leading to its degradation.

The protein localises to the cytoplasm. The enzyme catalyses tetradecanoyl-[ACP] + L-lysyl-[protein] = N(6)-tetradecanoyl-L-lysyl-[protein] + holo-[ACP] + H(+). Its activity is regulated as follows. The acyltransferase activity is inhibited by heme. Protein-lysine myristoyltransferase that catalyzes myristoylation of the protoxin (HlyA) at two internal lysine residues, thereby converting it to the active toxin. This is Protein-lysine myristoyltransferase HlyC from Escherichia coli.